Consider the following 333-residue polypeptide: Torsin-1A (333 aa).

An N-terminal signal peptide occupies residues 1 to 20; the sequence is MKLGRATLALLLLVPCVVRA. Residues 92-252 are interaction with SNAPIN; it reads KPKKPLTLSL…VSVFNNKNSG (161 aa). N-linked (GlcNAc...) asparagine glycans are attached at residues Asn144 and Asn159. The interval 252 to 333 is interaction with KLC1; that stretch reads GFWHSSLIDR…FTKLDYYLDD (82 aa). Positions 313-333 are interaction with SYNE3; it reads KVFSDKGCKTVFTKLDYYLDD.

This sequence belongs to the ClpA/ClpB family. Torsin subfamily. In terms of assembly, homohexamer. Interacts with TOR1B; the interaction may be specific of neural tissues. Interacts (ATP-bound) with TOR1AIP1 and TOR1AIP2; the interactions induce ATPase activity. Interacts with KLHL14; preferentially when ATP-free. Interacts with KLC1 (via TPR repeats); the interaction associates TOR1A with the kinesin oligomeric complex. Interacts with COPS4; the interaction associates TOR1A with the CSN complex. Interacts with SNAPIN; the interaction is direct and associates SNAPIN with the CSN complex. Interacts with STON2. Interacts (ATP-bound) with SYNE3 (via KASH domain); the interaction is required for SYNE3 nuclear envelope localization. Interacts with VIM; the interaction associates TOR1A with the cytoskeleton. Interacts with PLEC. Interacts (ATP-bound) with SLC6A3; regulates SLC6A3 transport to the plasma membrane. Post-translationally, N-glycosylated. In terms of tissue distribution, expressed in brain (at protein level).

The protein resides in the endoplasmic reticulum lumen. The protein localises to the nucleus inner membrane. It localises to the cell projection. It is found in the growth cone. Its subcellular location is the cytoplasmic vesicle membrane. The protein resides in the cytoplasmic vesicle. The protein localises to the secretory vesicle. It localises to the synaptic vesicle. It catalyses the reaction ATP + H2O = ADP + phosphate + H(+). Its function is as follows. Protein with chaperone functions important for the control of protein folding, processing, stability and localization as well as for the reduction of misfolded protein aggregates. Involved in the regulation of synaptic vesicle recycling, controls STON2 protein stability in collaboration with the COP9 signalosome complex (CSN). In the nucleus, may link the cytoskeleton with the nuclear envelope, this mechanism seems to be crucial for the control of nuclear polarity, cell movement and, specifically in neurons, nuclear envelope integrity. Participates in the cellular trafficking and may regulate the subcellular location of multipass membrane proteins such as the dopamine transporter SLC6A3, leading to the modulation of dopamine neurotransmission. In the endoplasmic reticulum, plays a role in the quality control of protein folding by increasing clearance of misfolded proteins such as SGCE variants or holding them in an intermediate state for proper refolding. May have a redundant function with TOR1B in non-neural tissues. In Rattus norvegicus (Rat), this protein is Torsin-1A (Tor1a).